The following is a 453-amino-acid chain: Homogentisate 1,2-dioxygenase (453 aa).

Basic and acidic residues predominate over residues 1–12; that stretch reads MLEKAERQRKAA. A disordered region spans residues 1–43; the sequence is MLEKAERQRKAAPDQQRSAGYMPGFGNDFETESLPGSLPQGQN. Catalysis depends on histidine 306, which acts as the Proton acceptor. Fe cation is bound by residues histidine 349 and glutamate 355. Homogentisate-binding residues include tyrosine 364 and histidine 385. A Fe cation-binding site is contributed by histidine 385.

Belongs to the homogentisate dioxygenase family. As to quaternary structure, hexamer; dimer of trimers. It depends on Fe cation as a cofactor.

The catalysed reaction is homogentisate + O2 = 4-maleylacetoacetate + H(+). It participates in amino-acid degradation; L-phenylalanine degradation; acetoacetate and fumarate from L-phenylalanine: step 4/6. Its function is as follows. Involved in the catabolism of homogentisate (2,5-dihydroxyphenylacetate or 2,5-OH-PhAc), a central intermediate in the degradation of phenylalanine and tyrosine. Catalyzes the oxidative ring cleavage of the aromatic ring of homogentisate to yield maleylacetoacetate. In Sinorhizobium medicae (strain WSM419) (Ensifer medicae), this protein is Homogentisate 1,2-dioxygenase.